The sequence spans 396 residues: MTLLNPYFGEFGGQFVPQILIPALRQLEEAFVSAQKDPEFQAEFTDLLKNYAGRPTALTLCKNLTAGTKTKLYLKREDLLHGGAHKTNQVLGQALLAKRMGKSEIIAETGAGQHGVATALACALLGLKCRVYMGAKDVERQSPNVFRMRLMGAEVIPVHSGSSTLKDACNEALRDWSGSYETAHYLLGTAAGPHPYPTIVREFQRMIGEETKAQILEKEGRLPDAVLACVGGGSNAIGMFADFIDDTHVRLIGIEPGGLGIESGQHGAPLKHGRVGIYFGMKSPMMQTSDGQIEESYSISAGLDFPSVGPQHAYLNSIGRADYVSITDDEALDAFKALCRGEGIIPALESSHALAHALKMIKAEPEKEQLLVVNLSGRGDKDIFTVHDILKDRGEI.

Lysine 86 carries the N6-(pyridoxal phosphate)lysine modification.

The protein belongs to the TrpB family. As to quaternary structure, tetramer of two alpha and two beta chains. Pyridoxal 5'-phosphate is required as a cofactor.

It catalyses the reaction (1S,2R)-1-C-(indol-3-yl)glycerol 3-phosphate + L-serine = D-glyceraldehyde 3-phosphate + L-tryptophan + H2O. The protein operates within amino-acid biosynthesis; L-tryptophan biosynthesis; L-tryptophan from chorismate: step 5/5. Its function is as follows. The beta subunit is responsible for the synthesis of L-tryptophan from indole and L-serine. The sequence is that of Tryptophan synthase beta chain from Pectobacterium atrosepticum (strain SCRI 1043 / ATCC BAA-672) (Erwinia carotovora subsp. atroseptica).